Reading from the N-terminus, the 376-residue chain is Succinyl-diaminopimelate desuccinylase (376 aa).

Residue histidine 66 coordinates Zn(2+). Aspartate 68 is a catalytic residue. Aspartate 99 serves as a coordination point for Zn(2+). Glutamate 133 serves as the catalytic Proton acceptor. Glutamate 134, glutamate 162, and histidine 349 together coordinate Zn(2+).

Belongs to the peptidase M20A family. DapE subfamily. Homodimer. Zn(2+) serves as cofactor. Requires Co(2+) as cofactor.

The catalysed reaction is N-succinyl-(2S,6S)-2,6-diaminopimelate + H2O = (2S,6S)-2,6-diaminopimelate + succinate. It functions in the pathway amino-acid biosynthesis; L-lysine biosynthesis via DAP pathway; LL-2,6-diaminopimelate from (S)-tetrahydrodipicolinate (succinylase route): step 3/3. In terms of biological role, catalyzes the hydrolysis of N-succinyl-L,L-diaminopimelic acid (SDAP), forming succinate and LL-2,6-diaminopimelate (DAP), an intermediate involved in the bacterial biosynthesis of lysine and meso-diaminopimelic acid, an essential component of bacterial cell walls. The chain is Succinyl-diaminopimelate desuccinylase from Vesicomyosocius okutanii subsp. Calyptogena okutanii (strain HA).